The following is a 280-amino-acid chain: Nucleotide-binding protein Dgeo_0723 (280 aa).

ATP is bound at residue 8–15; sequence GLSGSGKS. 57 to 60 contacts GTP; it reads DART.

The protein belongs to the RapZ-like family.

Its function is as follows. Displays ATPase and GTPase activities. In Deinococcus geothermalis (strain DSM 11300 / CIP 105573 / AG-3a), this protein is Nucleotide-binding protein Dgeo_0723.